Here is a 331-residue protein sequence, read N- to C-terminus: MEFYASLKSIAMHVPSERVKNAEFQQFLDTSDEWIEKRTGIKERRFANDEEKSSDLGVIAAKQAIERAHLTPKDIDLVVVATLSPDFLAMPSTACVLSAKLGIENKPAFDISAACTGFIYLLSVAKAYVESGMYENVLIVGAEKTSSVLDFKDRGTCILFGDGAGACVIGRTKRLKESILDVQISANGNFSNYLYTPRTLKPTPFNAKEEASEPFLCMKGNEVFKLAVKTLLKDVEMILEKNALKPEDVRLFIPHQANFRIIQAVREHLDFKDEQVVLTVHKYGNTSAASIPMAMGEAYEEGRLKKGDLMLLDAFGGGLTWGSALVYFGGS.

Residues C115 and H255 contribute to the active site. The ACP-binding stretch occupies residues 256–260 (QANFR). N285 is a catalytic residue.

It belongs to the thiolase-like superfamily. FabH family. Homodimer.

It is found in the cytoplasm. The catalysed reaction is malonyl-[ACP] + acetyl-CoA + H(+) = 3-oxobutanoyl-[ACP] + CO2 + CoA. The protein operates within lipid metabolism; fatty acid biosynthesis. Catalyzes the condensation reaction of fatty acid synthesis by the addition to an acyl acceptor of two carbons from malonyl-ACP. Catalyzes the first condensation reaction which initiates fatty acid synthesis and may therefore play a role in governing the total rate of fatty acid production. Possesses both acetoacetyl-ACP synthase and acetyl transacylase activities. Its substrate specificity determines the biosynthesis of branched-chain and/or straight-chain of fatty acids. The sequence is that of Beta-ketoacyl-[acyl-carrier-protein] synthase III from Helicobacter pylori (strain ATCC 700392 / 26695) (Campylobacter pylori).